A 59-amino-acid polypeptide reads, in one-letter code: Antibacterial peptide enbocin (59 aa).

An N-terminal signal peptide occupies residues 1 to 20; sequence MNFTRIIFFLFVVVFATASG. Residue lysine 21 is a propeptide. Serine amide is present on serine 58.

This sequence belongs to the cecropin family.

The protein localises to the secreted. Has antibacterial activity against Gram-positive and Gram-negative bacteria. This is Antibacterial peptide enbocin from Bombyx mori (Silk moth).